The chain runs to 264 residues: Protein-lysine methyltransferase METTL21C (264 aa).

Over residues 1 to 10 (MDVCLSSAQQ) the composition is skewed to polar residues. Residues 1 to 46 (MDVCLSSAQQPGRRGEGLSSPGGWLEAEKKGAPQKDSTGGVLEESN) are disordered. S-adenosyl-L-methionine-binding positions include Trp92, 120 to 122 (GAG), Asp141, Trp172, and Ser193.

Belongs to the methyltransferase superfamily. METTL21 family. In terms of assembly, interacts with members of the heat shock protein 70 families; these proteins may possibly be methylation substrates for the enzyme.

It localises to the nucleus. It is found in the cytoplasm. The catalysed reaction is L-lysyl-[protein] + S-adenosyl-L-methionine = N(6)-methyl-L-lysyl-[protein] + S-adenosyl-L-homocysteine + H(+). It catalyses the reaction N(6)-methyl-L-lysyl-[protein] + S-adenosyl-L-methionine = N(6),N(6)-dimethyl-L-lysyl-[protein] + S-adenosyl-L-homocysteine + H(+). It carries out the reaction N(6),N(6)-dimethyl-L-lysyl-[protein] + S-adenosyl-L-methionine = N(6),N(6),N(6)-trimethyl-L-lysyl-[protein] + S-adenosyl-L-homocysteine + H(+). Protein-lysine N-methyltransferase using S-adenosyl-L-methionine as methyl donor. Mono-di and trimethylates 'Lys-943' of AARS1. This Homo sapiens (Human) protein is Protein-lysine methyltransferase METTL21C.